The chain runs to 226 residues: V-type proton ATPase subunit E 1 (226 aa).

Ala2 carries the post-translational modification N-acetylalanine. At Tyr56 the chain carries Phosphotyrosine.

Belongs to the V-ATPase E subunit family. As to quaternary structure, V-ATPase is a heteromultimeric enzyme made up of two complexes: the ATP-hydrolytic V1 complex and the proton translocation V0 complex. The V1 complex consists of three catalytic AB heterodimers that form a heterohexamer, three peripheral stalks each consisting of EG heterodimers, one central rotor including subunits D and F, and the regulatory subunits C and H. The proton translocation complex V0 consists of the proton transport subunit a, a ring of proteolipid subunits c9c'', rotary subunit d, subunits e and f, and the accessory subunits ATP6AP1/Ac45 and ATP6AP2/PRR. Interacts with RABL2/RABL2A; binds preferentially to GTP-bound RABL2. Interacts with ALDOC. Interacts with RAB11B. In terms of tissue distribution, expressed in brain (at protein level).

It is found in the apical cell membrane. Its subcellular location is the cytoplasmic vesicle. The protein resides in the secretory vesicle. It localises to the synaptic vesicle membrane. The protein localises to the clathrin-coated vesicle membrane. Its function is as follows. Subunit of the V1 complex of vacuolar(H+)-ATPase (V-ATPase), a multisubunit enzyme composed of a peripheral complex (V1) that hydrolyzes ATP and a membrane integral complex (V0) that translocates protons. V-ATPase is responsible for acidifying and maintaining the pH of intracellular compartments and in some cell types, is targeted to the plasma membrane, where it is responsible for acidifying the extracellular environment. The protein is V-type proton ATPase subunit E 1 (Atp6v1e1) of Rattus norvegicus (Rat).